Reading from the N-terminus, the 78-residue chain is Probable [Fe-S]-dependent transcriptional repressor (78 aa).

Residues Cys56, Cys61, Cys64, and Cys70 each coordinate iron-sulfur cluster.

Belongs to the FeoC family.

May function as a transcriptional regulator that controls feoABC expression. The sequence is that of Probable [Fe-S]-dependent transcriptional repressor from Escherichia coli (strain UTI89 / UPEC).